Here is a 651-residue protein sequence, read N- to C-terminus: Epithelial sodium channel subunit beta (651 aa).

The Cytoplasmic segment spans residues 1 to 50 (MFLKRWFIRALHRLQKGPGYGYSELFVWYCNNTNTHGPKRLIIEGPKKKT). The chain crosses the membrane as a helical span at residues 51 to 71 (LWSLFTVTFACLVFWQWGLLI). Topologically, residues 72-541 (QTYLSWGVSV…GGQFGFWMGG (470 aa)) are extracellular. 8 disulfides stabilise this stretch: C98/C281, C205/C212, C258/C265, C370/C457, C395/C453, C399/C449, C408/C435, and C410/C424. A helical membrane pass occupies residues 542–562 (SVLCIIEFGEVFIDCIWIAVI). Residues 563–651 (RFVKWYKNRK…TEHHSDSEDL (89 aa)) are Cytoplasmic-facing. Positions 612–651 (QPPDLYLPTTLEIPGTPPPKYDSLRVHPIDTEHHSDSEDL) are disordered. The span at 633–651 (DSLRVHPIDTEHHSDSEDL) shows a compositional bias: basic and acidic residues.

This sequence belongs to the amiloride-sensitive sodium channel (TC 1.A.6) family. SCNN1B subfamily. In terms of assembly, component of the heterotrimeric epithelial sodium channel (ENaC) composed of an alpha/SCNN1A, a beta/SCNN1B and a gamma/SCNN1G subunit. As to expression, strongly expressed in gill, kidney and rectum and more weakly in brain, eye, liver and muscle.

The protein resides in the apical cell membrane. It localises to the cytoplasmic vesicle membrane. It catalyses the reaction Na(+)(in) = Na(+)(out). Its activity is regulated as follows. Originally identified and characterized by its inhibition by the diuretic drug amiloride. Its function is as follows. This is one of the three pore-forming subunits of the heterotrimeric epithelial sodium channel (ENaC), a critical regulator of sodium balance and fluid homeostasis. ENaC operates in epithelial tissues, where it mediates the electrodiffusion of sodium ions from extracellular fluid through the apical membrane of cells, with water following osmotically. The protein is Epithelial sodium channel subunit beta of Neoceratodus forsteri (Australian lungfish).